Reading from the N-terminus, the 62-residue chain is uncharacterized protein (62 aa).

This is an uncharacterized protein from Schizosaccharomyces pombe (strain 972 / ATCC 24843) (Fission yeast).